The chain runs to 199 residues: NADH-quinone oxidoreductase subunit C (199 aa).

Belongs to the complex I 30 kDa subunit family. In terms of assembly, NDH-1 is composed of 14 different subunits. Subunits NuoB, C, D, E, F, and G constitute the peripheral sector of the complex.

It localises to the cell inner membrane. The catalysed reaction is a quinone + NADH + 5 H(+)(in) = a quinol + NAD(+) + 4 H(+)(out). Functionally, NDH-1 shuttles electrons from NADH, via FMN and iron-sulfur (Fe-S) centers, to quinones in the respiratory chain. The immediate electron acceptor for the enzyme in this species is believed to be ubiquinone. Couples the redox reaction to proton translocation (for every two electrons transferred, four hydrogen ions are translocated across the cytoplasmic membrane), and thus conserves the redox energy in a proton gradient. The sequence is that of NADH-quinone oxidoreductase subunit C from Polynucleobacter necessarius subsp. necessarius (strain STIR1).